Here is a 1591-residue protein sequence, read N- to C-terminus: Rho guanine nucleotide exchange factor TIAM1 (1591 aa).

Residues 1–70 (MGNAESQNVD…TPSIPQSLAE (70 aa)) form a disordered region. A lipid anchor (N-myristoyl glycine) is attached at Gly-2. The span at 8–19 (NVDHEFYGEKHA) shows a compositional bias: basic and acidic residues. A compositionally biased stretch (basic residues) spans 20–49 (SLGRKHTSRSLRLSHKTRRTRHASSGKAIH). Low complexity predominate over residues 53 to 67 (EVSTRSSSTPSIPQS). Phosphoserine occurs at positions 231, 356, and 358. Disordered stretches follow at residues 305-380 (QISL…DRAR) and 393-422 (MSTT…SPGQ). Residues 340–359 (TTDTDLLSRRSNATNSSYSP) are compositionally biased toward polar residues. Low complexity predominate over residues 367-376 (GSDSGSSSTG). Over residues 412–422 (QSSGTLSSPGQ) the composition is skewed to polar residues. Positions 434 to 549 (VRKAGALAVK…TAIHSACAAA (116 aa)) constitute a PH 1 domain. The residue at position 695 (Ser-695) is a Phosphoserine. The RBD domain occupies 765 to 832 (TPSWFCLPNN…QPEEDIYELL (68 aa)). A Phosphotyrosine; by NTRK2 modification is found at Tyr-829. Residues 845–908 (NIHIEKSDAA…NNRAAGTLNS (64 aa)) form the PDZ domain. Residues 933-1034 (GVELLENPPH…TSPQLATTRQ (102 aa)) form a disordered region. Over residues 958–975 (LTSNPGHSLSSEQGSSAE) the composition is skewed to polar residues. The span at 977 to 990 (APEEGEGPDLESSD) shows a compositional bias: acidic residues. Over residues 1014 to 1028 (PSDSSPSPQDATSPQ) the composition is skewed to low complexity. Positions 1040–1234 (KLRKVICELL…NKVASHINEM (195 aa)) constitute a DH domain. The PH 2 domain occupies 1261-1397 (DLSMGDLLLH…KSVHSILRDK (137 aa)). A Phosphotyrosine modification is found at Tyr-1323. Glycyl lysine isopeptide (Lys-Gly) (interchain with G-Cter in ubiquitin) cross-links involve residues Lys-1404 and Lys-1420. The interval 1456 to 1481 (TIDSDAISASSPEKEPQQPAGGGDTD) is disordered. Ser-1519 carries the post-translational modification Phosphoserine.

This sequence belongs to the TIAM family. Component of the Par polarity complex, composed of at least phosphorylated PRKCZ, PARD3 and TIAM1. Interacts with BAIAP2. Interacts (via PDZ domain) with CNTNAP4, SDC1 and SDC3 (via C-terminus). Interacts with CD44, PARD3 and MAPK8IP2. Interacts with EPHA8; regulates clathrin-mediated endocytosis of EPHA8. Interacts with NTRK2; mediates the activation of RAC1 by BDNF. Ubiquitinated. Undergoes 'Lys-48' ubiquitination at Lys-1404 and Lys-1420 by a CUL3(KBTBD6/7) E3 ubiquitin ligase complex composed of CUL3, RBX1, KBTBD6 and KBTBD7. 'Lys-48' ubiquitination at Lys-1404 and Lys-1420 triggers proteasomal degradation. Ubiquitination at Lys-1404 and Lys-1420 by CUL3(KBTBD6/7) also requires the membrane-associated protein GABARAP and may therefore be spatially restricted within the cell. As to expression, highly expressed in brain and testis and at low or moderate levels in almost all other normal tissues. Found in virtually all analyzed tumor cell lines including B- and T-lymphomas, neuroblastomas, melanomas and carcinomas.

Its subcellular location is the cell junction. The protein localises to the cell membrane. In terms of biological role, guanyl-nucleotide exchange factor that activates RHO-like proteins and connects extracellular signals to cytoskeletal activities. Activates RAC1, CDC42, and to a lesser extent RHOA and their downstream signaling to regulate processes like cell adhesion and cell migration. The chain is Rho guanine nucleotide exchange factor TIAM1 from Mus musculus (Mouse).